A 178-amino-acid polypeptide reads, in one-letter code: Large ribosomal subunit protein bL25 (178 aa).

This sequence belongs to the bacterial ribosomal protein bL25 family. CTC subfamily. In terms of assembly, part of the 50S ribosomal subunit; part of the 5S rRNA/L5/L18/L25 subcomplex. Contacts the 5S rRNA. Binds to the 5S rRNA independently of L5 and L18.

This is one of the proteins that binds to the 5S RNA in the ribosome where it forms part of the central protuberance. The chain is Large ribosomal subunit protein bL25 from Campylobacter jejuni subsp. jejuni serotype O:6 (strain 81116 / NCTC 11828).